Consider the following 342-residue polypeptide: Replication factor C subunit 4 (342 aa).

ATP contacts are provided by residues V24, V36, G61 to T68, N157, and R215.

This sequence belongs to the activator 1 small subunits family. As to quaternary structure, heteropentamer of subunits rfc1, rfc2, rfc3, rfc4 and rfc5 that forms a complex (RFC) with PCNA in the presence of ATP. Two other complexes exist where rfc1 can be replaced by either ctf18 or elg1 to form the ctf18-RFC or the elg1-RFC complexes respectively.

The protein resides in the nucleus. Functionally, the elongation of primed DNA templates by DNA polymerase delta and epsilon requires the action of the accessory proteins PCNA and activator 1. This is Replication factor C subunit 4 (rfc4) from Schizosaccharomyces pombe (strain 972 / ATCC 24843) (Fission yeast).